The following is a 981-amino-acid chain: Serine/threonine-protein kinase D1044.8 (981 aa).

A Protein kinase domain is found at 453–725; the sequence is YELLDQLGAG…MCGVRLLEYL (273 aa). ATP is bound by residues 459–467 and Lys-488; that span reads LGAGAFGCV. Asp-591 functions as the Proton acceptor in the catalytic mechanism. Polar residues predominate over residues 735–746; sequence TSDMTASQSSYN. Disordered stretches follow at residues 735–802 and 823–847; these read TSDM…PSSI and IPSRRRVQTCSTEHPARSSSSTELK. Residues 752 to 762 are compositionally biased toward low complexity; the sequence is SPSSLNSSTSS. A compositionally biased stretch (polar residues) spans 830–847; that stretch reads QTCSTEHPARSSSSTELK.

Belongs to the protein kinase superfamily. NEK Ser/Thr protein kinase family. NIMA subfamily. Mg(2+) serves as cofactor.

The catalysed reaction is L-seryl-[protein] + ATP = O-phospho-L-seryl-[protein] + ADP + H(+). The enzyme catalyses L-threonyl-[protein] + ATP = O-phospho-L-threonyl-[protein] + ADP + H(+). The polypeptide is Serine/threonine-protein kinase D1044.8 (nekl-4) (Caenorhabditis elegans).